Consider the following 100-residue polypeptide: UPF0251 protein VVA1436 (100 aa).

The protein belongs to the UPF0251 family.

The chain is UPF0251 protein VVA1436 from Vibrio vulnificus (strain YJ016).